The following is a 122-amino-acid chain: MQRIMLRAKLHRVTVTEADLHYEGSCGIDEDLLDAAGMREFERIELYNVTNGERFDTYIIKAARGSGAISLNGAAARRAQVGDLLIICTYGPMSEEQSATHKPQVVLVDDANRVKEIRKFPA.

The active-site Schiff-base intermediate with substrate; via pyruvic acid is Ser25. A Pyruvic acid (Ser) modification is found at Ser25. Residue Thr57 coordinates substrate. Tyr58 (proton donor) is an active-site residue. Gly73–Ala75 is a binding site for substrate.

It belongs to the PanD family. As to quaternary structure, heterooctamer of four alpha and four beta subunits. Pyruvate serves as cofactor. Post-translationally, is synthesized initially as an inactive proenzyme, which is activated by self-cleavage at a specific serine bond to produce a beta-subunit with a hydroxyl group at its C-terminus and an alpha-subunit with a pyruvoyl group at its N-terminus.

Its subcellular location is the cytoplasm. The catalysed reaction is L-aspartate + H(+) = beta-alanine + CO2. The protein operates within cofactor biosynthesis; (R)-pantothenate biosynthesis; beta-alanine from L-aspartate: step 1/1. Catalyzes the pyruvoyl-dependent decarboxylation of aspartate to produce beta-alanine. The sequence is that of Aspartate 1-decarboxylase from Bordetella parapertussis (strain 12822 / ATCC BAA-587 / NCTC 13253).